A 444-amino-acid chain; its full sequence is MFPWLAYGHISPYLELAKRLTDRGFAIYICSTPINLGFIKKRITGKYSVTIKLVELHLPDTPELPPHYHTTNGLPPHLMATLKRALNGAKPELSNILKTLKPDFVIYDATQTWTAALTVAHNIPAVKFLTSSVSMLAYFCHLFMKPGIEFPFPAIYLSDFEQAKARTAAQDARADAEENDPAAERPNRDCDSIFLVKSSRAIEGKYIDYLFDLMKLKMLPVGMLVEEPVKDDQGDNSNELIQWLGTKSQRSTVLVSFGTEYFLTKEEMEEIAHGLELSEVNFIWVVRFAMGQKIRPDEALPEGFLERVGDRGRIVEGWAPQSEVLAHPSTGGFICHCGWNSVVESIEFGVPVIAMPMHLDQPLNARLVVEIGAGMEVVRDETGKFDRKEIARAIKDAMVEKTGENTRAKMLDVKGRVELKEKQELDEVAELLTQLVTETTQSSN.

His9 (proton acceptor) is an active-site residue. His9 is a binding site for an anthocyanidin. The active-site Charge relay is the Asp108. Residues Thr130, Ala319, Gln321, His336, Trp339, Asn340, Ser341, Glu344, Asp360, and Gln361 each coordinate UDP-alpha-D-glucose.

It belongs to the UDP-glycosyltransferase family. In terms of tissue distribution, ubiquitous.

It catalyses the reaction beta-D-glucosyl crocetin + UDP-alpha-D-glucose = beta-D-gentiobiosyl crocetin + UDP + H(+). The catalysed reaction is bis(beta-D-glucosyl) crocetin + UDP-alpha-D-glucose = beta-D-gentiobiosyl beta-D-glucosyl crocetin + UDP + H(+). The enzyme catalyses beta-D-gentiobiosyl beta-D-glucosyl crocetin + UDP-alpha-D-glucose = bis(beta-D-gentiobiosyl) crocetin + UDP + H(+). Functionally, glucosyltransferase catalyzing the beta 1-6 glucosylation of the sugar moiety of crocetin glucosyl esters to produce crocetin gentiobiosyl esters. Weak activity toward curcumin glucosides, but no activity with flavonoid glucosides, coumarin glucosides, 4-nitrophenyl glucoside or crocetin. Involved with UGT75L6 in sequential glycosylation of crocetin to crocin (bis(beta-D-gentiobiosyl) crocetin). This Gardenia jasminoides (Cape jasmine) protein is Beta-D-glucosyl crocetin beta-1,6-glucosyltransferase (UGT94E5).